The sequence spans 200 residues: ATP-dependent Clp protease proteolytic subunit 1 (200 aa).

Catalysis depends on Ser-98, which acts as the Nucleophile. His-123 is a catalytic residue.

The protein belongs to the peptidase S14 family. In terms of assembly, fourteen ClpP subunits assemble into 2 heptameric rings which stack back to back to give a disk-like structure with a central cavity, resembling the structure of eukaryotic proteasomes.

The protein resides in the cytoplasm. The enzyme catalyses Hydrolysis of proteins to small peptides in the presence of ATP and magnesium. alpha-casein is the usual test substrate. In the absence of ATP, only oligopeptides shorter than five residues are hydrolyzed (such as succinyl-Leu-Tyr-|-NHMec, and Leu-Tyr-Leu-|-Tyr-Trp, in which cleavage of the -Tyr-|-Leu- and -Tyr-|-Trp bonds also occurs).. In terms of biological role, cleaves peptides in various proteins in a process that requires ATP hydrolysis. Has a chymotrypsin-like activity. Plays a major role in the degradation of misfolded proteins. This chain is ATP-dependent Clp protease proteolytic subunit 1, found in Mycobacterium bovis (strain ATCC BAA-935 / AF2122/97).